The primary structure comprises 588 residues: Adenine deaminase (588 aa).

Belongs to the metallo-dependent hydrolases superfamily. Adenine deaminase family. As to quaternary structure, homodimer. Mn(2+) is required as a cofactor.

The enzyme catalyses adenine + H2O + H(+) = hypoxanthine + NH4(+). The polypeptide is Adenine deaminase (Shigella flexneri serotype 5b (strain 8401)).